The sequence spans 503 residues: Glutamate--tRNA ligase (503 aa).

Residues 14-24 (PSPTGSLHIGG) carry the 'HIGH' region motif. A 'KMSKS' region motif is present at residues 261–265 (KLSKR). Residue Lys264 participates in ATP binding.

It belongs to the class-I aminoacyl-tRNA synthetase family. Glutamate--tRNA ligase type 1 subfamily. Monomer.

It is found in the cytoplasm. It catalyses the reaction tRNA(Glu) + L-glutamate + ATP = L-glutamyl-tRNA(Glu) + AMP + diphosphate. In terms of biological role, catalyzes the attachment of glutamate to tRNA(Glu) in a two-step reaction: glutamate is first activated by ATP to form Glu-AMP and then transferred to the acceptor end of tRNA(Glu). This Chloroflexus aurantiacus (strain ATCC 29366 / DSM 635 / J-10-fl) protein is Glutamate--tRNA ligase.